The sequence spans 72 residues: Metallothionein-like protein type 2 (72 aa).

This sequence belongs to the metallothionein superfamily. Type 15 family.

Functionally, metallothioneins have a high content of cysteine residues that bind various heavy metals. The polypeptide is Metallothionein-like protein type 2 (Solanum lycopersicum (Tomato)).